The chain runs to 333 residues: Homeobox protein Hox-D13 (333 aa).

Residues 1–24 (MDGLRTDGGAAGAAPASSSSSSSV) form a disordered region. Positions 12–24 (GAAPASSSSSSSV) are enriched in low complexity. Positions 266 to 325 (GRKKRVPYTKLQLKELENEYAINKFINKDKRRRISAATNLSERQVTIWFQNRRVKDKKIV) form a DNA-binding region, homeobox.

The protein belongs to the Abd-B homeobox family.

Its subcellular location is the nucleus. In terms of biological role, sequence-specific transcription factor that binds gene promoters and activates their transcription. Part of a developmental regulatory system that provides cells with specific positional identities on the anterior-posterior axis. The sequence is that of Homeobox protein Hox-D13 (HOXD13) from Carollia perspicillata (Seba's short-tailed bat).